The chain runs to 245 residues: Phosphoribosylaminoimidazole-succinocarboxamide synthase (245 aa).

Belongs to the SAICAR synthetase family.

The enzyme catalyses 5-amino-1-(5-phospho-D-ribosyl)imidazole-4-carboxylate + L-aspartate + ATP = (2S)-2-[5-amino-1-(5-phospho-beta-D-ribosyl)imidazole-4-carboxamido]succinate + ADP + phosphate + 2 H(+). It participates in purine metabolism; IMP biosynthesis via de novo pathway; 5-amino-1-(5-phospho-D-ribosyl)imidazole-4-carboxamide from 5-amino-1-(5-phospho-D-ribosyl)imidazole-4-carboxylate: step 1/2. The chain is Phosphoribosylaminoimidazole-succinocarboxamide synthase from Trichormus variabilis (strain ATCC 29413 / PCC 7937) (Anabaena variabilis).